Here is a 100-residue protein sequence, read N- to C-terminus: Putative protein adenylyltransferase MJ0604 (100 aa).

Positions 29–43 (GSYARGDYTEESDID) match the GSX(10)DXD motif motif. The Mg(2+) site is built by D41 and D43.

Belongs to the MntA antitoxin family. Mg(2+) serves as cofactor.

It catalyses the reaction L-tyrosyl-[protein] + ATP = O-(5'-adenylyl)-L-tyrosyl-[protein] + diphosphate. The catalysed reaction is O-(5'-adenylyl)-L-tyrosyl-[protein] + ATP = O-[5'-(adenylyl-(5'-&gt;3')-adenylyl)]-L-tyrosyl-[protein] + diphosphate. In terms of biological role, putative antitoxin component of a putative type VII toxin-antitoxin (TA) system. Its cognate toxin might be MJ0605, which it might AMPylate. The polypeptide is Putative protein adenylyltransferase MJ0604 (Methanocaldococcus jannaschii (strain ATCC 43067 / DSM 2661 / JAL-1 / JCM 10045 / NBRC 100440) (Methanococcus jannaschii)).